The primary structure comprises 89 residues: Acylphosphatase (89 aa).

Residues 4 to 89 (SYIAHISGRV…WQEHHFFSIG (86 aa)) form the Acylphosphatase-like domain. Active-site residues include arginine 19 and asparagine 37.

This sequence belongs to the acylphosphatase family.

The catalysed reaction is an acyl phosphate + H2O = a carboxylate + phosphate + H(+). This Colwellia psychrerythraea (strain 34H / ATCC BAA-681) (Vibrio psychroerythus) protein is Acylphosphatase (acyP).